Reading from the N-terminus, the 298-residue chain is 4-diphosphocytidyl-2-C-methyl-D-erythritol kinase (298 aa).

Residue Lys15 is part of the active site. Pro100–Ala110 contacts ATP. The active site involves Asp142.

It belongs to the GHMP kinase family. IspE subfamily.

It carries out the reaction 4-CDP-2-C-methyl-D-erythritol + ATP = 4-CDP-2-C-methyl-D-erythritol 2-phosphate + ADP + H(+). Its pathway is isoprenoid biosynthesis; isopentenyl diphosphate biosynthesis via DXP pathway; isopentenyl diphosphate from 1-deoxy-D-xylulose 5-phosphate: step 3/6. Functionally, catalyzes the phosphorylation of the position 2 hydroxy group of 4-diphosphocytidyl-2C-methyl-D-erythritol. The polypeptide is 4-diphosphocytidyl-2-C-methyl-D-erythritol kinase (Rhodopseudomonas palustris (strain BisA53)).